The chain runs to 148 residues: UPF0260 protein YPK_2117 (148 aa).

This sequence belongs to the UPF0260 family.

This Yersinia pseudotuberculosis serotype O:3 (strain YPIII) protein is UPF0260 protein YPK_2117.